The primary structure comprises 213 residues: Translation initiation factor IF-3 (213 aa).

The tract at residues 178-213 is disordered; it reads VKTLIKSEKPEKPEKPEKSEKTEKQGPSTPPAPSAS. Residues 182–201 are compositionally biased toward basic and acidic residues; the sequence is IKSEKPEKPEKPEKSEKTEK.

This sequence belongs to the IF-3 family. As to quaternary structure, monomer.

It is found in the cytoplasm. In terms of biological role, IF-3 binds to the 30S ribosomal subunit and shifts the equilibrium between 70S ribosomes and their 50S and 30S subunits in favor of the free subunits, thus enhancing the availability of 30S subunits on which protein synthesis initiation begins. The polypeptide is Translation initiation factor IF-3 (Solibacter usitatus (strain Ellin6076)).